Here is a 445-residue protein sequence, read N- to C-terminus: Methylenetetrahydrofolate--tRNA-(uracil-5-)-methyltransferase TrmFO (445 aa).

Residue 9–14 (GGGLAG) participates in FAD binding.

The protein belongs to the MnmG family. TrmFO subfamily. FAD is required as a cofactor.

It localises to the cytoplasm. The enzyme catalyses uridine(54) in tRNA + (6R)-5,10-methylene-5,6,7,8-tetrahydrofolate + NADH + H(+) = 5-methyluridine(54) in tRNA + (6S)-5,6,7,8-tetrahydrofolate + NAD(+). It catalyses the reaction uridine(54) in tRNA + (6R)-5,10-methylene-5,6,7,8-tetrahydrofolate + NADPH + H(+) = 5-methyluridine(54) in tRNA + (6S)-5,6,7,8-tetrahydrofolate + NADP(+). Catalyzes the folate-dependent formation of 5-methyl-uridine at position 54 (M-5-U54) in all tRNAs. This chain is Methylenetetrahydrofolate--tRNA-(uracil-5-)-methyltransferase TrmFO, found in Solibacter usitatus (strain Ellin6076).